A 282-amino-acid chain; its full sequence is Biotin synthase (282 aa).

The Radical SAM core domain maps to 1-228 (MQEIFLCSIS…NARLMVAGGR (228 aa)). Residues cysteine 17, cysteine 21, and cysteine 24 each coordinate [4Fe-4S] cluster. Cysteine 61, cysteine 96, cysteine 154, and arginine 221 together coordinate [2Fe-2S] cluster.

Belongs to the radical SAM superfamily. Biotin synthase family. In terms of assembly, homodimer. [4Fe-4S] cluster serves as cofactor. It depends on [2Fe-2S] cluster as a cofactor.

The catalysed reaction is (4R,5S)-dethiobiotin + (sulfur carrier)-SH + 2 reduced [2Fe-2S]-[ferredoxin] + 2 S-adenosyl-L-methionine = (sulfur carrier)-H + biotin + 2 5'-deoxyadenosine + 2 L-methionine + 2 oxidized [2Fe-2S]-[ferredoxin]. It functions in the pathway cofactor biosynthesis; biotin biosynthesis; biotin from 7,8-diaminononanoate: step 2/2. In terms of biological role, catalyzes the conversion of dethiobiotin (DTB) to biotin by the insertion of a sulfur atom into dethiobiotin via a radical-based mechanism. The chain is Biotin synthase from Helicobacter pylori (strain Shi470).